We begin with the raw amino-acid sequence, 228 residues long: Phosphoribosylformylglycinamidine synthase subunit PurQ (228 aa).

Residues 3–226 (FAVVVFPGSN…VTYWRDAHVV (224 aa)) form the Glutamine amidotransferase type-1 domain. Cys86 serves as the catalytic Nucleophile. Catalysis depends on residues His195 and Glu197.

In terms of assembly, part of the FGAM synthase complex composed of 1 PurL, 1 PurQ and 2 PurS subunits.

The protein resides in the cytoplasm. The catalysed reaction is N(2)-formyl-N(1)-(5-phospho-beta-D-ribosyl)glycinamide + L-glutamine + ATP + H2O = 2-formamido-N(1)-(5-O-phospho-beta-D-ribosyl)acetamidine + L-glutamate + ADP + phosphate + H(+). It catalyses the reaction L-glutamine + H2O = L-glutamate + NH4(+). It participates in purine metabolism; IMP biosynthesis via de novo pathway; 5-amino-1-(5-phospho-D-ribosyl)imidazole from N(2)-formyl-N(1)-(5-phospho-D-ribosyl)glycinamide: step 1/2. Part of the phosphoribosylformylglycinamidine synthase complex involved in the purines biosynthetic pathway. Catalyzes the ATP-dependent conversion of formylglycinamide ribonucleotide (FGAR) and glutamine to yield formylglycinamidine ribonucleotide (FGAM) and glutamate. The FGAM synthase complex is composed of three subunits. PurQ produces an ammonia molecule by converting glutamine to glutamate. PurL transfers the ammonia molecule to FGAR to form FGAM in an ATP-dependent manner. PurS interacts with PurQ and PurL and is thought to assist in the transfer of the ammonia molecule from PurQ to PurL. This is Phosphoribosylformylglycinamidine synthase subunit PurQ from Anoxybacillus flavithermus (strain DSM 21510 / WK1).